A 241-amino-acid polypeptide reads, in one-letter code: MKLNQNTMLVGKKVVLVPYTSEHVPRYHEWMKSEELRHLTASEQLTLQQEYEMQCSWCEDEDKCTFIVLDAEKWQAQPRPPEESCMVGDVNLFLTDLEDPTLGEIEVMIAEPSYRRQGLGTEASLLIMSYGVTKLGLTKFEAKIGQENEPSIRMFQKLHFKQVAMSNVFQEVTLRLAVSEPERKWILEQTSHMEERPYRTRKAEPVTATLSEQKSWNCPLPRPDGCMGDTSAVSSVCARLS.

In terms of domain architecture, N-acetyltransferase spans 34–181 (EELRHLTASE…VTLRLAVSEP (148 aa)).

Belongs to the acetyltransferase family. GNAT subfamily.

It carries out the reaction N-terminal L-methionyl-[tubulin] + acetyl-CoA = N-terminal N(alpha)-acetyl-L-methionyl-[tubulin] + CoA + H(+). N-acetyltransferase that mediates the acetylation of the N-terminal residues of alpha- and beta-tubulin. This is Alpha/beta-tubulin-N-acetyltransferase 9 (Nat9) from Mus musculus (Mouse).